Here is a 593-residue protein sequence, read N- to C-terminus: Zinc metalloproteinase-disintegrin-like atrase-B (593 aa).

Residues 1-20 form the signal peptide; it reads MIQALLVIICLAVFPHQGSS. A propeptide spanning residues 21-191 is cleaved from the precursor; the sequence is IILESGNVND…DESIEKTSQL (171 aa). The region spanning 205 to 400 is the Peptidase M12B domain; sequence KYIEFYVIVD…DRPQCILNKP (196 aa). Positions 208 and 292 each coordinate Ca(2+). 3 disulfides stabilise this stretch: Cys-316/Cys-395, Cys-356/Cys-379, and Cys-358/Cys-363. N-linked (GlcNAc...) asparagine glycosylation occurs at Asn-319. His-341 is a Zn(2+) binding site. The active site involves Glu-342. Residues His-345 and His-351 each coordinate Zn(2+). The Ca(2+) site is built by Cys-395, Asn-398, Ile-410, Asn-413, Phe-415, Glu-417, Glu-420, and Asp-423. Positions 408 to 477 constitute a Disintegrin domain; it reads PPICGNYFVE…ECPTDSLQRN (70 aa). 11 cysteine pairs are disulfide-bonded: Cys-422-Cys-435, Cys-424-Cys-430, Cys-434-Cys-440, Cys-449-Cys-469, Cys-456-Cys-488, Cys-481-Cys-493, Cys-500-Cys-550, Cys-515-Cys-558, Cys-528-Cys-538, Cys-545-Cys-581, and Cys-575-Cys-586. The short motif at 455 to 457 is the D/ECD-tripeptide element; sequence DCD. Positions 457, 458, 460, and 472 each coordinate Ca(2+). Asn-490 carries N-linked (GlcNAc...) asparagine glycosylation.

This sequence belongs to the venom metalloproteinase (M12B) family. P-III subfamily. P-IIIa sub-subfamily. As to quaternary structure, monomer. The cofactor is Zn(2+). As to expression, expressed by the venom gland.

It is found in the secreted. Its activity is regulated as follows. Inhibited by EDTA, EGTA, 1,10-phenanthroline and DTT. Not inhibited by PMSF and SBTI. Functionally, snake venom zinc protease that inhibits the classical and alternative pathways of complement by cleaving factor B, C6, C7, and C8. Also slowly and selectively degrades alpha-chain of fibrinogen (FGA), and shows edema-inducing activity. The protein is Zinc metalloproteinase-disintegrin-like atrase-B of Naja atra (Chinese cobra).